The following is a 232-amino-acid chain: 5'-methylthioadenosine/S-adenosylhomocysteine nucleosidase (232 aa).

The active-site Proton acceptor is Glu-12. Substrate contacts are provided by residues Gly-78, Ile-152, and 173–174 (ME). Asp-197 serves as the catalytic Proton donor.

It belongs to the PNP/UDP phosphorylase family. MtnN subfamily. As to quaternary structure, homodimer.

It carries out the reaction S-adenosyl-L-homocysteine + H2O = S-(5-deoxy-D-ribos-5-yl)-L-homocysteine + adenine. It catalyses the reaction S-methyl-5'-thioadenosine + H2O = 5-(methylsulfanyl)-D-ribose + adenine. The catalysed reaction is 5'-deoxyadenosine + H2O = 5-deoxy-D-ribose + adenine. Its pathway is amino-acid biosynthesis; L-methionine biosynthesis via salvage pathway; S-methyl-5-thio-alpha-D-ribose 1-phosphate from S-methyl-5'-thioadenosine (hydrolase route): step 1/2. Its function is as follows. Catalyzes the irreversible cleavage of the glycosidic bond in both 5'-methylthioadenosine (MTA) and S-adenosylhomocysteine (SAH/AdoHcy) to adenine and the corresponding thioribose, 5'-methylthioribose and S-ribosylhomocysteine, respectively. Also cleaves 5'-deoxyadenosine, a toxic by-product of radical S-adenosylmethionine (SAM) enzymes, into 5-deoxyribose and adenine. Thus, is required for in vivo function of the radical SAM enzymes biotin synthase and lipoic acid synthase, that are inhibited by 5'-deoxyadenosine accumulation. This Salmonella dublin (strain CT_02021853) protein is 5'-methylthioadenosine/S-adenosylhomocysteine nucleosidase.